The sequence spans 239 residues: Pimeloyl-[acyl-carrier protein] methyl ester esterase (239 aa).

Substrate is bound by residues W20, 77-78, and 138-142; these read SM and FISLQ. S77 functions as the Nucleophile in the catalytic mechanism. Residues D192 and H220 contribute to the active site. H220 contributes to the substrate binding site.

The protein belongs to the AB hydrolase superfamily. Carboxylesterase BioH family. Monomer.

Its subcellular location is the cytoplasm. The enzyme catalyses 6-carboxyhexanoyl-[ACP] methyl ester + H2O = 6-carboxyhexanoyl-[ACP] + methanol + H(+). The protein operates within cofactor biosynthesis; biotin biosynthesis. Functionally, the physiological role of BioH is to remove the methyl group introduced by BioC when the pimeloyl moiety is complete. It allows to synthesize pimeloyl-ACP via the fatty acid synthetic pathway through the hydrolysis of the ester bonds of pimeloyl-ACP esters. This chain is Pimeloyl-[acyl-carrier protein] methyl ester esterase, found in Legionella pneumophila (strain Lens).